The sequence spans 203 residues: Probable chemoreceptor glutamine deamidase CheD (203 aa).

The protein belongs to the CheD family.

It carries out the reaction L-glutaminyl-[protein] + H2O = L-glutamyl-[protein] + NH4(+). Functionally, probably deamidates glutamine residues to glutamate on methyl-accepting chemotaxis receptors (MCPs), playing an important role in chemotaxis. The chain is Probable chemoreceptor glutamine deamidase CheD from Janthinobacterium sp. (strain Marseille) (Minibacterium massiliensis).